The sequence spans 514 residues: Membrane-bound lytic murein transglycosylase F (514 aa).

Residues 1–30 (MKKLKINYLFIGILTLLLAAALWPSIPWFG) form the signal peptide. The non-LT domain stretch occupies residues 31 to 269 (KTENHIAAIQ…RIEEKYLGHG (239 aa)). An LT domain region spans residues 270 to 514 (DDFDYVDTRS…LFTPQKKEEK (245 aa)). Residue Glu-314 is part of the active site.

It in the N-terminal section; belongs to the bacterial solute-binding protein 3 family. This sequence in the C-terminal section; belongs to the transglycosylase Slt family.

The protein resides in the cell outer membrane. The catalysed reaction is Exolytic cleavage of the (1-&gt;4)-beta-glycosidic linkage between N-acetylmuramic acid (MurNAc) and N-acetylglucosamine (GlcNAc) residues in peptidoglycan, from either the reducing or the non-reducing ends of the peptidoglycan chains, with concomitant formation of a 1,6-anhydrobond in the MurNAc residue.. Its function is as follows. Murein-degrading enzyme that degrades murein glycan strands and insoluble, high-molecular weight murein sacculi, with the concomitant formation of a 1,6-anhydromuramoyl product. Lytic transglycosylases (LTs) play an integral role in the metabolism of the peptidoglycan (PG) sacculus. Their lytic action creates space within the PG sacculus to allow for its expansion as well as for the insertion of various structures such as secretion systems and flagella. The protein is Membrane-bound lytic murein transglycosylase F of Salmonella choleraesuis (strain SC-B67).